The sequence spans 136 residues: Large ribosomal subunit protein uL16 (136 aa).

This sequence belongs to the universal ribosomal protein uL16 family. Part of the 50S ribosomal subunit.

Its function is as follows. Binds 23S rRNA and is also seen to make contacts with the A and possibly P site tRNAs. The sequence is that of Large ribosomal subunit protein uL16 from Pelagibacter ubique (strain HTCC1062).